Consider the following 310-residue polypeptide: Methionyl-tRNA formyltransferase (310 aa).

Residue S111–P114 coordinates (6S)-5,6,7,8-tetrahydrofolate.

The protein belongs to the Fmt family.

The enzyme catalyses L-methionyl-tRNA(fMet) + (6R)-10-formyltetrahydrofolate = N-formyl-L-methionyl-tRNA(fMet) + (6S)-5,6,7,8-tetrahydrofolate + H(+). In terms of biological role, attaches a formyl group to the free amino group of methionyl-tRNA(fMet). The formyl group appears to play a dual role in the initiator identity of N-formylmethionyl-tRNA by promoting its recognition by IF2 and preventing the misappropriation of this tRNA by the elongation apparatus. The sequence is that of Methionyl-tRNA formyltransferase from Methylobacterium sp. (strain 4-46).